Here is a 147-residue protein sequence, read N- to C-terminus: MKLWVDADACPKVIRETIVRAAERTGVECTFVANHVVPVPKRANIHSLQVPAGFDIADNEIVRRVEANDLVITSDIPLADEVISKGAQALSSRGELYTKDTIKARLNIRDFMDTMRSSGIQTGGPAALSQTERREFANHLDRILAKR.

It belongs to the UPF0178 family.

The chain is UPF0178 protein VIBHAR_03247 from Vibrio campbellii (strain ATCC BAA-1116).